The following is a 235-amino-acid chain: Protein Thf1 (235 aa).

Positions 183–204 form a coiled coil; the sequence is DKLNKDLELYRSNLDKMAQALV. The interval 213–235 is disordered; that stretch reads DRKKREQRKQQSTAPVAPPSSNE. A compositionally biased stretch (polar residues) spans 222–235; the sequence is QQSTAPVAPPSSNE.

This sequence belongs to the THF1 family.

Its function is as follows. May be involved in photosynthetic membrane biogenesis. The sequence is that of Protein Thf1 from Nostoc punctiforme (strain ATCC 29133 / PCC 73102).